A 188-amino-acid chain; its full sequence is Elongation factor P (188 aa).

The protein belongs to the elongation factor P family.

It is found in the cytoplasm. It functions in the pathway protein biosynthesis; polypeptide chain elongation. Functionally, involved in peptide bond synthesis. Stimulates efficient translation and peptide-bond synthesis on native or reconstituted 70S ribosomes in vitro. Probably functions indirectly by altering the affinity of the ribosome for aminoacyl-tRNA, thus increasing their reactivity as acceptors for peptidyl transferase. This Caulobacter vibrioides (strain ATCC 19089 / CIP 103742 / CB 15) (Caulobacter crescentus) protein is Elongation factor P.